The following is a 244-amino-acid chain: MKNPQKLAITFLPLYVIPTYTLCIKALYKNTHAGLLFSFLGFVLNTPAMSISGPPTTFILYRLHGVRRVLHWTLPDHEQTLYAFTGGSRSMAVKTDARCDTMSGGMIVLQHTHTVTLLTIDCSTDFSSYAFTHRDFHLQDKPHATFAMPFMSWVGSDPTSQLYSNVGGVLSVITEDDLSMCISIVIYGLRVNRPDDQTTPTPTPHQYTSQRRQPETNCPSSPQPAFFTSDDDVLSLILRDAANA.

The tract at residues 193–227 is disordered; sequence RPDDQTTPTPTPHQYTSQRRQPETNCPSSPQPAFF. A compositionally biased stretch (polar residues) spans 205–220; that stretch reads HQYTSQRRQPETNCPS.

It belongs to the alphaherpesvirinae HHV-1 UL4 family.

It localises to the host nucleus. The polypeptide is Nuclear protein UL4 homolog (Varicella-zoster virus (strain Dumas) (HHV-3)).